A 398-amino-acid polypeptide reads, in one-letter code: Succinate--CoA ligase [ADP-forming] subunit beta (398 aa).

Residues 9 to 254 (KALLKSYGAP…TTEEDEKEIE (246 aa)) form the ATP-grasp domain. ATP-binding positions include Lys-46, 53–55 (GRG), Glu-109, Ala-112, and Glu-117. The Mg(2+) site is built by Asn-209 and Asp-223. Residues Asn-274 and 331–333 (GIM) each bind substrate.

It belongs to the succinate/malate CoA ligase beta subunit family. Heterotetramer of two alpha and two beta subunits. Mg(2+) is required as a cofactor.

It catalyses the reaction succinate + ATP + CoA = succinyl-CoA + ADP + phosphate. The enzyme catalyses GTP + succinate + CoA = succinyl-CoA + GDP + phosphate. It functions in the pathway carbohydrate metabolism; tricarboxylic acid cycle; succinate from succinyl-CoA (ligase route): step 1/1. Its function is as follows. Succinyl-CoA synthetase functions in the citric acid cycle (TCA), coupling the hydrolysis of succinyl-CoA to the synthesis of either ATP or GTP and thus represents the only step of substrate-level phosphorylation in the TCA. The beta subunit provides nucleotide specificity of the enzyme and binds the substrate succinate, while the binding sites for coenzyme A and phosphate are found in the alpha subunit. The sequence is that of Succinate--CoA ligase [ADP-forming] subunit beta from Sinorhizobium medicae (strain WSM419) (Ensifer medicae).